A 331-amino-acid chain; its full sequence is Protein mono-ADP-ribosyltransferase PARP11 (331 aa).

Lys11 carries the post-translational modification N6-(ADP-ribosyl)lysine. The 85-residue stretch at Ser15–Arg99 folds into the WWE domain. An ADP-ribosylcysteine mark is found at Cys49 and Cys65. Asp80 bears the ADP-ribosyl aspartic acid mark. Positions Ile116–His331 constitute a PARP catalytic domain.

This sequence belongs to the ARTD/PARP family. Post-translationally, auto-mono-ADP-ribosylated. In terms of tissue distribution, predominantly expressed in testis, preferentially in postmeiotic germ cells. Also detectable in other tissues, including liver, lung, spleen, thymus and brain.

Its subcellular location is the nucleus. It is found in the nuclear pore complex. The catalysed reaction is L-aspartyl-[protein] + NAD(+) = 4-O-(ADP-D-ribosyl)-L-aspartyl-[protein] + nicotinamide. It carries out the reaction L-cysteinyl-[protein] + NAD(+) = S-(ADP-D-ribosyl)-L-cysteinyl-[protein] + nicotinamide + H(+). The enzyme catalyses L-glutamyl-[protein] + NAD(+) = 5-O-(ADP-D-ribosyl)-L-glutamyl-[protein] + nicotinamide. It catalyses the reaction L-lysyl-[protein] + NAD(+) = N(6)-(ADP-D-ribosyl)-L-lysyl-[protein] + nicotinamide + H(+). Mono-ADP-ribosyltransferase that mediates mono-ADP-ribosylation of target proteins. Plays a role in nuclear envelope stability and nuclear remodeling during spermiogenesis. Inhibits the type I interferon activated signaling pathway. Mechanistically, mono-ADP-ribosylates beta-TrCP/BTRC to promote IFNAR1 ubiquitination and protect BTRC from ubiquitin-proteasome degradation. The polypeptide is Protein mono-ADP-ribosyltransferase PARP11 (Mus musculus (Mouse)).